Reading from the N-terminus, the 139-residue chain is Large-conductance mechanosensitive channel (139 aa).

2 helical membrane-spanning segments follow: residues 9–29 (AFAV…GAAF) and 79–99 (IQTV…VKAI).

It belongs to the MscL family. As to quaternary structure, homopentamer.

Its subcellular location is the cell inner membrane. In terms of biological role, channel that opens in response to stretch forces in the membrane lipid bilayer. May participate in the regulation of osmotic pressure changes within the cell. The chain is Large-conductance mechanosensitive channel from Pseudomonas putida (strain GB-1).